A 343-amino-acid polypeptide reads, in one-letter code: Anthranilate phosphoribosyltransferase (343 aa).

Residues G84, 87–88, T92, 94–97, 112–120, and S124 contribute to the 5-phospho-alpha-D-ribose 1-diphosphate site; these read GD, NIST, and KHGNRSASS. G84 provides a ligand contact to anthranilate. S96 is a binding site for Mg(2+). Anthranilate is bound at residue N115. R170 contacts anthranilate. Mg(2+) is bound by residues D229 and E230.

It belongs to the anthranilate phosphoribosyltransferase family. Homodimer. Requires Mg(2+) as cofactor.

It carries out the reaction N-(5-phospho-beta-D-ribosyl)anthranilate + diphosphate = 5-phospho-alpha-D-ribose 1-diphosphate + anthranilate. It participates in amino-acid biosynthesis; L-tryptophan biosynthesis; L-tryptophan from chorismate: step 2/5. In terms of biological role, catalyzes the transfer of the phosphoribosyl group of 5-phosphorylribose-1-pyrophosphate (PRPP) to anthranilate to yield N-(5'-phosphoribosyl)-anthranilate (PRA). The polypeptide is Anthranilate phosphoribosyltransferase (Bordetella bronchiseptica (strain ATCC BAA-588 / NCTC 13252 / RB50) (Alcaligenes bronchisepticus)).